Reading from the N-terminus, the 433-residue chain is 4-hydroxy-3-methylbut-2-en-1-yl diphosphate synthase (flavodoxin) (433 aa).

Residues Cys-320, Cys-323, Cys-366, and Glu-373 each coordinate [4Fe-4S] cluster.

It belongs to the IspG family. [4Fe-4S] cluster serves as cofactor.

It catalyses the reaction (2E)-4-hydroxy-3-methylbut-2-enyl diphosphate + oxidized [flavodoxin] + H2O + 2 H(+) = 2-C-methyl-D-erythritol 2,4-cyclic diphosphate + reduced [flavodoxin]. The protein operates within isoprenoid biosynthesis; isopentenyl diphosphate biosynthesis via DXP pathway; isopentenyl diphosphate from 1-deoxy-D-xylulose 5-phosphate: step 5/6. Functionally, converts 2C-methyl-D-erythritol 2,4-cyclodiphosphate (ME-2,4cPP) into 1-hydroxy-2-methyl-2-(E)-butenyl 4-diphosphate. The polypeptide is 4-hydroxy-3-methylbut-2-en-1-yl diphosphate synthase (flavodoxin) (Beijerinckia indica subsp. indica (strain ATCC 9039 / DSM 1715 / NCIMB 8712)).